Here is a 154-residue protein sequence, read N- to C-terminus: MLGFRQTATAIVRPVGTIGYARRCYHPKVIDHYTNPRNVGTLDKKLTNVGTGLVGAPACGDVMRLQIQVDDSTGVIENVKFKTFGCGSAIASSSYMTELVRGKTLADAEKIKNTEIARELSLPPVKLHCSMLAEDAIKAAIKDYRSKRKATELR.

Belongs to the NifU family. In terms of assembly, component of the core Fe-S cluster (ISC) assembly machinery. [2Fe-2S] cluster is required as a cofactor.

It localises to the mitochondrion matrix. Its pathway is cofactor biosynthesis; iron-sulfur cluster biosynthesis. Its function is as follows. Scaffold protein for the de novo synthesis of iron-sulfur (Fe-S) clusters within mitochondria, which is required for maturation of both mitochondrial and cytoplasmic [2Fe-2S] and [4Fe-4S] proteins. First, a [2Fe-2S] cluster is transiently assembled on the scaffold protein ISU1. In a second step, the cluster is released from ISU1, transferred to a glutaredoxin, followed by the formation of mitochondrial [2Fe-2S] proteins, the synthesis of [4Fe-4S] clusters and their target-specific insertion into the recipient apoproteins. Cluster assembly on ISU1 depends on the function of the cysteine desulfurase complex NFS1-ISD11, which serves as the sulfur donor for cluster synthesis, the iron-binding protein frataxin as the putative iron donor, and the electron transfer chain comprised of ferredoxin reductase and ferredoxin, which receive their electrons from NADH. This chain is Iron sulfur cluster assembly protein 1, mitochondrial (ISU1), found in Eremothecium gossypii (strain ATCC 10895 / CBS 109.51 / FGSC 9923 / NRRL Y-1056) (Yeast).